The sequence spans 569 residues: Linoleate hydratase (569 aa).

Tyrosine 87 is an FAD binding site. Tyrosine 205 (proton donor) is an active-site residue. Residues valine 254, serine 300, and threonine 524 each coordinate FAD.

This sequence belongs to the oleate hydratase family. FAD is required as a cofactor.

It localises to the cell membrane. The protein localises to the cytoplasm. The catalysed reaction is (9Z,12Z)-octadecadienoate + H2O = (10S)-hydroxy-(12Z)-octadecenoate. It carries out the reaction (10E,12Z)-octadecadienoate + H2O = (10S)-hydroxy-(12Z)-octadecenoate. It catalyses the reaction (9Z)-octadecenoate + H2O = 10-hydroxyoctadecanoate. The enzyme catalyses (10E)-octadecenoate + H2O = 10-hydroxyoctadecanoate. The catalysed reaction is (9E,11E)-octadecadienoate + H2O = 10-hydroxy-(11E)-octadecenoate. It carries out the reaction (9Z,11E)-octadecadienoate + H2O = 10-hydroxy-(11E)-octadecenoate. It catalyses the reaction (9Z)-hexadecenoate + H2O = 10-hydroxyhexadecanoate. The enzyme catalyses (9Z,12Z,15Z)-octadecatrienoate + H2O = (10S)-hydroxy-(12Z,15Z)-octadecadienoate. The catalysed reaction is (6Z,9Z,12Z)-octadecatrienoate + H2O = (10S)-hydroxy-(6Z,12Z)-octadecadienoate. It carries out the reaction (6Z,9Z,12Z,15Z)-octadecatetraenoate + H2O = (10S)-hydroxy-(6Z,12Z,15Z)-octadecatrienoate. It participates in lipid metabolism; fatty acid metabolism. Its activity is regulated as follows. The addition of NADH or NADPH highly increases catalytic activity, likely by reducing the cofactor FAD to FADH2. The hydration and dehydration reactions are strongly inhibited by Ag(+), Fe(2+), Cu(2+), Zn(2+), Hg(2+), and Fe(3+). Functionally, is involved in a saturation metabolic pathway of polyunsaturated fatty acids, that detoxifies unsaturated fatty acids and generates hydroxy fatty acids, oxo fatty acids, conjugated fatty acids such as conjugated linoleic acids (CLAs), and partially saturated trans-fatty acids as intermediates. CLA-HY catalyzes the hydration and dehydration steps in the production of 10-hydroxy-cis-12-octadecenoate, trans-10,cis-12-CLA, cis-9,trans-11-CLA, trans-9,trans-11-CLA, oleate and trans-10-octadecenoate during linoleate metabolism. Is also able to hydrate palmitoleic acid (cis-9-hexadecenoic acid), oleic acid, alpha-linolenic acid, gamma-linolenic acid, and stearidonic acid into the corresponding 10-hydroxy fatty acids, and dehydrate 10-hydroxy-cis-12,cis-15-octadecadienoic acid, 10-hydroxy-cis-6,cis-12-octadecadienoic acid, and 10-hydroxyoctadecanoic acid into the corresponding fatty acids with cis double bonds at the Delta9 position. As part of the gut microbiome, this enzyme modifies host fatty acid composition and is expected to improve human health by altering lipid metabolism related to the onset of metabolic syndrome. Shows regioselectivity for Delta9 double bond hydration, generating C10 hydroxy groups in the (S)-configuration with high enantioselectivity, when another double bond is in position 12. Is not able to hydrate fatty acids with a trans carbon-carbon double bond at Delta9 position (elaidic acid, trans-9-octadecenoic acid), fatty acid esters (methyl linoleate, monolinolein, dilinolein, and trilinolein), and conjugated fatty acids (conjugated linoleic acids), as well as fatty acids with other chain lengths, such as myristoleic acid (cis-9-tetradecenoic acid), arachidonic acid (cis-5,cis-8,cis-11,cis-14-eicosatetraenoic acid), EPA (cis-5,cis-8,cis-11,cis-14,cis-17-eicosapentaenoic acid), DHA (cis-4,cis-7,cis-10,cis-13,cis-16,cis-19-docosahexaenoic acid) and fatty acids with a cis carbon-carbon double bond at Delta11 position, such as cis-vaccenic acid and cis-11-octadecenoic acid, or fatty alcohols, such as linoleyl alcohol. Is not able to dehydrate 12-hydroxy, 3-hydroxy, and 9-hydroxy fatty acids. This Lactiplantibacillus plantarum (Lactobacillus plantarum) protein is Linoleate hydratase.